Here is a 373-residue protein sequence, read N- to C-terminus: tRNA pseudouridine synthase Pus10 (373 aa).

The active-site Nucleophile is Asp197. Substrate is bound by residues Tyr265 and Tyr336.

It belongs to the pseudouridine synthase Pus10 family.

The catalysed reaction is uridine(54) in tRNA = pseudouridine(54) in tRNA. It catalyses the reaction uridine(55) in tRNA = pseudouridine(55) in tRNA. Its function is as follows. Responsible for synthesis of pseudouridine from uracil-54 and uracil-55 in the psi GC loop of transfer RNAs. This is tRNA pseudouridine synthase Pus10 from Korarchaeum cryptofilum (strain OPF8).